The sequence spans 306 residues: Voltage-dependent anion channel-forming protein RSc3414 (306 aa).

4 helical membrane passes run 28 to 48 (LFLIFCISLVAMAVHVHWLPI), 50 to 70 (VNLSTTPFSLIGIALAVFLGF), 213 to 233 (YSVMIHRTVYFFCAALPFGLV), and 239 to 259 (FTPVFSVFVAYAFMAHEAIAA).

This sequence belongs to the anion channel-forming bestrophin (TC 1.A.46) family.

It is found in the cell membrane. In Ralstonia nicotianae (strain ATCC BAA-1114 / GMI1000) (Ralstonia solanacearum), this protein is Voltage-dependent anion channel-forming protein RSc3414.